A 122-amino-acid chain; its full sequence is Large ribosomal subunit protein uL14 (122 aa).

This sequence belongs to the universal ribosomal protein uL14 family. Part of the 50S ribosomal subunit. Forms a cluster with proteins L3 and L19. In the 70S ribosome, L14 and L19 interact and together make contacts with the 16S rRNA in bridges B5 and B8.

Binds to 23S rRNA. Forms part of two intersubunit bridges in the 70S ribosome. The chain is Large ribosomal subunit protein uL14 from Mesomycoplasma hyopneumoniae (strain 232) (Mycoplasma hyopneumoniae).